The chain runs to 280 residues: Phosphatidylserine decarboxylase proenzyme (280 aa).

Catalysis depends on charge relay system; for autoendoproteolytic cleavage activity residues D88, H144, and S247. Residue S247 is the Schiff-base intermediate with substrate; via pyruvic acid; for decarboxylase activity of the active site. A Pyruvic acid (Ser); by autocatalysis modification is found at S247.

The protein belongs to the phosphatidylserine decarboxylase family. PSD-B subfamily. Prokaryotic type I sub-subfamily. Heterodimer of a large membrane-associated beta subunit and a small pyruvoyl-containing alpha subunit. Pyruvate serves as cofactor. Post-translationally, is synthesized initially as an inactive proenzyme. Formation of the active enzyme involves a self-maturation process in which the active site pyruvoyl group is generated from an internal serine residue via an autocatalytic post-translational modification. Two non-identical subunits are generated from the proenzyme in this reaction, and the pyruvate is formed at the N-terminus of the alpha chain, which is derived from the carboxyl end of the proenzyme. The autoendoproteolytic cleavage occurs by a canonical serine protease mechanism, in which the side chain hydroxyl group of the serine supplies its oxygen atom to form the C-terminus of the beta chain, while the remainder of the serine residue undergoes an oxidative deamination to produce ammonia and the pyruvoyl prosthetic group on the alpha chain. During this reaction, the Ser that is part of the protease active site of the proenzyme becomes the pyruvoyl prosthetic group, which constitutes an essential element of the active site of the mature decarboxylase.

It is found in the cell membrane. The catalysed reaction is a 1,2-diacyl-sn-glycero-3-phospho-L-serine + H(+) = a 1,2-diacyl-sn-glycero-3-phosphoethanolamine + CO2. It participates in phospholipid metabolism; phosphatidylethanolamine biosynthesis; phosphatidylethanolamine from CDP-diacylglycerol: step 2/2. Functionally, catalyzes the formation of phosphatidylethanolamine (PtdEtn) from phosphatidylserine (PtdSer). The polypeptide is Phosphatidylserine decarboxylase proenzyme (Xanthomonas euvesicatoria pv. vesicatoria (strain 85-10) (Xanthomonas campestris pv. vesicatoria)).